The primary structure comprises 375 residues: Homeobox protein Meis3 (375 aa).

Residues 25–51 (PETVPAVPGPYGPHRPPQPLPPGLDSD) are disordered. A compositionally biased stretch (pro residues) spans 31-46 (VPGPYGPHRPPQPLPP). The MEIS N-terminal domain occupies 96 to 179 (GGDVCSSDSF…PIDLVIEDRD (84 aa)). Disordered regions lie at residues 197–268 (PDQN…KRGI) and 329–348 (NRTGQGAAFSPEGQPIGGYT). The span at 227-241 (SQSGDNSSDQGDGLD) shows a compositional bias: low complexity. Positions 262 to 324 (RNKKRGIFPK…NARRRIVQPM (63 aa)) form a DNA-binding region, homeobox; TALE-type.

The protein belongs to the TALE/MEIS homeobox family.

It localises to the nucleus. Its function is as follows. Transcriptional regulator which directly modulates PDPK1 expression, thus promoting survival of pancreatic beta-cells. Also regulates expression of NDFIP1, BNIP3, and CCNG1. In Homo sapiens (Human), this protein is Homeobox protein Meis3 (MEIS3).